Consider the following 80-residue polypeptide: Type VII secretion system accessory factor EsaB (80 aa).

This sequence belongs to the EsaB family.

It localises to the cytoplasm. In terms of biological role, seems to regulate secreted factors that contribute to the establishment of persistent infections in the host. This Staphylococcus aureus (strain COL) protein is Type VII secretion system accessory factor EsaB.